The chain runs to 298 residues: Mimecan (298 aa).

An N-terminal signal peptide occupies residues 1-19 (METVHSTFLLLLFVPLTQQ). Asn88 is a glycosylation site (N-linked (GlcNAc...) (keratan sulfate) asparagine). LRR repeat units lie at residues 112–131 (DAVP…FNKI), 132–155 (KKLT…GNLI), 156–179 (EDIE…ENQL), 180–199 (LRLP…HNKI), 200–225 (KSKG…HNDL), 226–246 (ESVP…FNSI), and 247–277 (SSLT…GNPI). A disulfide bridge links Cys255 with Cys288. The N-linked (GlcNAc...) (keratan sulfate) asparagine glycan is linked to Asn258.

Belongs to the small leucine-rich proteoglycan (SLRP) family. SLRP class III subfamily. Post-translationally, contains keratan sulfate.

Its subcellular location is the secreted. It localises to the extracellular space. The protein localises to the extracellular matrix. Its function is as follows. Induces bone formation in conjunction with TGF-beta-1 or TGF-beta-2. The polypeptide is Mimecan (Ogn) (Mus musculus (Mouse)).